The primary structure comprises 318 residues: 2-keto-3-deoxygluconate permease (318 aa).

A run of 10 helical transmembrane segments spans residues 10 to 30 (LPGG…TLWP), 42 to 62 (GLIS…GATI), 82 to 102 (IAVA…GGIP), 109 to 129 (LSVL…YAAL), 139 to 159 (AGAV…LILG), 163 to 183 (LATF…LGFA), 201 to 221 (TLVP…TIVH), 224 to 244 (ASGV…LLLA), 257 to 277 (VAAS…AGMA), and 288 to 308 (TALV…LTAL).

It belongs to the KdgT transporter family.

Its subcellular location is the cell inner membrane. It carries out the reaction 2-dehydro-3-deoxy-D-gluconate(in) + H(+)(in) = 2-dehydro-3-deoxy-D-gluconate(out) + H(+)(out). Functionally, catalyzes the proton-dependent uptake of 2-keto-3-deoxygluconate (KDG) into the cell. In Xanthomonas oryzae pv. oryzae (strain MAFF 311018), this protein is 2-keto-3-deoxygluconate permease.